Reading from the N-terminus, the 229-residue chain is Large ribosomal subunit protein uL1 (229 aa).

This sequence belongs to the universal ribosomal protein uL1 family. Part of the 50S ribosomal subunit.

In terms of biological role, binds directly to 23S rRNA. The L1 stalk is quite mobile in the ribosome, and is involved in E site tRNA release. Its function is as follows. Protein L1 is also a translational repressor protein, it controls the translation of the L11 operon by binding to its mRNA. The protein is Large ribosomal subunit protein uL1 of Listeria innocua serovar 6a (strain ATCC BAA-680 / CLIP 11262).